The sequence spans 100 residues: uncharacterized protein (100 aa).

This is an uncharacterized protein from Caenorhabditis elegans.